The primary structure comprises 623 residues: DNA polymerase alpha subunit B (623 aa).

The interval 113–151 is disordered; sequence IPKIKDEPSSSVDVSTARNKNNHNNNNNNNPSLPNKSMF. Residues 121 to 130 show a composition bias toward polar residues; the sequence is SSSVDVSTAR.

The protein belongs to the DNA polymerase alpha subunit B family. DNA polymerase alpha:primase is a four subunit enzyme complex, which is assembled throughout the cell cycle, and consists of the two DNA polymerase subunits A and B, and the DNA primase large and small subunits. Subunit B binds to subunit A.

It localises to the nucleus. Functionally, may play an essential role at the early stage of chromosomal DNA replication by coupling the polymerase alpha/primase complex to the cellular replication machinery. This is DNA polymerase alpha subunit B (polA2) from Dictyostelium discoideum (Social amoeba).